Consider the following 463-residue polypeptide: Argininosuccinate lyase (463 aa).

It belongs to the lyase 1 family. Argininosuccinate lyase subfamily.

The protein resides in the cytoplasm. The enzyme catalyses 2-(N(omega)-L-arginino)succinate = fumarate + L-arginine. Its pathway is amino-acid biosynthesis; L-arginine biosynthesis; L-arginine from L-ornithine and carbamoyl phosphate: step 3/3. The protein is Argininosuccinate lyase of Thermosynechococcus vestitus (strain NIES-2133 / IAM M-273 / BP-1).